We begin with the raw amino-acid sequence, 681 residues long: MSGQEKSDKSVDMWSFLRCLGYLSSFNLLVAVCLGMYVRWEQTSEPMILVLFILGLFVSAIACILYYYFSMESASLSLFHLWFGFLQGLLCFLNSPSLEDEIKEQVTNYLLLSSVSIRTLWALTERLCANPKYKPVVITSSELLELLGFGVASISLVFDKSLAMIALTFALTALIIDLRMKSPLALPNLACFSVIAAVTFFQSLKIQTNPFALSCYLGRLICEPLLDVYFSSLTATERWKQFLSAGRLWRRFSLFPLALVELLFFVVCAFKLGNLKDWYLVIPGFCIFGLLWILCHMVFLVTLWCFHTKLSECQKMWAAQRLQTLNLDRIMASRGMRHFCLISERLVLFCLMSTIILGAVSWQVANGLFMSVFLVVLPLESLAHGLFHELGNGLGGTCVGYAVVIPTCYSSADGQPVLLPPGQVQELHSTSTLNAVQRLFSHHLIQTFGCDYSTSLSLETLLVKLRSFLELCTAEGPRHDTYILYYSGHTLPSGDWTLAGGDYLRMKQILDMWREQNSSFSSRLILVLDTENSAPWVKAVRKVEGMYVAVQGAKLSPVQDAEGQDAPRLGDFTSEWVKYNCDPESGVQWSERGRVISAIYGVSKPWSDYALHLPTGSDVAKHWKTHFPKTTYPLVAVANWCCGLNLLWLCSVCLRCVRRLKLSWFPPSILDTGQGIKLVRS.

Transmembrane regions (helical) follow at residues 16–36, 47–67, 73–93, 135–155, 156–176, 184–204, 252–272, 281–301, and 346–365; these read FLRCLGYLSSFNLLVAVCLGM, MILVLFILGLFVSAIACILYY, SASLSLFHLWFGFLQGLLCFL, PVVITSSELLELLGFGVASIS, LVFDKSLAMIALTFALTALII, LALPNLACFSVIAAVTFFQSL, FSLFPLALVELLFFVVCAFKL, VIPGFCIFGLLWILCHMVFLV, and LVLFCLMSTIILGAVSWQVA. Asn517 carries an N-linked (GlcNAc...) asparagine glycan.

This sequence belongs to the TMEM168 family.

Its subcellular location is the nucleus membrane. In terms of biological role, plays a key role in maintaining the cardiac electrical stability by modulating cell surface expression of SCN5A. The chain is Transmembrane protein 168-A (tmem168a) from Danio rerio (Zebrafish).